A 1048-amino-acid chain; its full sequence is FERM, ARHGEF and pleckstrin domain-containing protein 1 (1048 aa).

The segment at Met1–Gly37 is disordered. Ser20 and Ser23 each carry phosphoserine. Thr24 carries the phosphothreonine modification. Positions Met40–Glu320 constitute an FERM domain. Residues Ser340, Ser373, Ser389, Ser403, Ser427, Ser433, and Ser437 each carry the phosphoserine modification. Residues Phe361–Lys536 are disordered. Residues Thr371–Leu395 show a composition bias toward polar residues. Polar residues-rich tracts occupy residues Ser472–Gly491 and Val498–Pro513. Ser512 and Ser516 each carry phosphoserine. The 192-residue stretch at Lys542–Thr733 folds into the DH domain. One can recognise a PH 1 domain in the interval Glu762–Asp859. Phosphoserine occurs at positions 836, 875, and 881. Positions Asn865–Ala907 are disordered. Thr886 carries the phosphothreonine modification. 3 positions are modified to phosphoserine: Ser892, Ser899, and Ser902. Residues Glu935–Ser1032 form the PH 2 domain.

Interacts with CADM1. Interacts with RAC1. Detected in brain cortex, hippocampus, striatum, olfactory bulb, cerebellum and hindbrain (at protein level).

It localises to the cell membrane. The protein localises to the synapse. The protein resides in the synaptosome. It is found in the cytoplasm. Its subcellular location is the cytosol. It localises to the cell projection. The protein localises to the filopodium. The protein resides in the dendrite. It is found in the dendritic spine. In terms of biological role, functions as a guanine nucleotide exchange factor for RAC1. May play a role in semaphorin signaling. Plays a role in the assembly and disassembly of dendritic filopodia, the formation of dendritic spines, regulation of dendrite length and ultimately the formation of synapses. The protein is FERM, ARHGEF and pleckstrin domain-containing protein 1 (Farp1) of Mus musculus (Mouse).